The sequence spans 274 residues: 3-methyl-2-oxobutanoate hydroxymethyltransferase (274 aa).

Asp49 and Asp88 together coordinate Mg(2+). 3-methyl-2-oxobutanoate-binding positions include 49-50, Asp88, and Lys118; that span reads DS. Glu120 is a binding site for Mg(2+). The Proton acceptor role is filled by Glu187.

This sequence belongs to the PanB family. As to quaternary structure, homodecamer; pentamer of dimers. It depends on Mg(2+) as a cofactor.

It is found in the cytoplasm. The enzyme catalyses 3-methyl-2-oxobutanoate + (6R)-5,10-methylene-5,6,7,8-tetrahydrofolate + H2O = 2-dehydropantoate + (6S)-5,6,7,8-tetrahydrofolate. Its pathway is cofactor biosynthesis; (R)-pantothenate biosynthesis; (R)-pantoate from 3-methyl-2-oxobutanoate: step 1/2. In terms of biological role, catalyzes the reversible reaction in which hydroxymethyl group from 5,10-methylenetetrahydrofolate is transferred onto alpha-ketoisovalerate to form ketopantoate. This is 3-methyl-2-oxobutanoate hydroxymethyltransferase from Rhodopseudomonas palustris (strain ATCC BAA-98 / CGA009).